A 92-amino-acid chain; its full sequence is Probable Fe(2+)-trafficking protein (92 aa).

It belongs to the Fe(2+)-trafficking protein family.

Could be a mediator in iron transactions between iron acquisition and iron-requiring processes, such as synthesis and/or repair of Fe-S clusters in biosynthetic enzymes. This chain is Probable Fe(2+)-trafficking protein, found in Shewanella oneidensis (strain ATCC 700550 / JCM 31522 / CIP 106686 / LMG 19005 / NCIMB 14063 / MR-1).